The chain runs to 619 residues: Phosphomethylpyrimidine synthase (619 aa).

Residues 1–11 (MHEQRSLTMNA) are compositionally biased toward polar residues. Positions 1 to 25 (MHEQRSLTMNALTPAVSTGPLPASR) are disordered. Residues N220, M249, Y278, H314, 334 to 336 (SRG), 375 to 378 (DGLR), and E414 contribute to the substrate site. H418 serves as a coordination point for Zn(2+). Y441 provides a ligand contact to substrate. H482 serves as a coordination point for Zn(2+). 3 residues coordinate [4Fe-4S] cluster: C562, C565, and C570.

Belongs to the ThiC family. In terms of assembly, homodimer. It depends on [4Fe-4S] cluster as a cofactor.

The enzyme catalyses 5-amino-1-(5-phospho-beta-D-ribosyl)imidazole + S-adenosyl-L-methionine = 4-amino-2-methyl-5-(phosphooxymethyl)pyrimidine + CO + 5'-deoxyadenosine + formate + L-methionine + 3 H(+). Its pathway is cofactor biosynthesis; thiamine diphosphate biosynthesis. In terms of biological role, catalyzes the synthesis of the hydroxymethylpyrimidine phosphate (HMP-P) moiety of thiamine from aminoimidazole ribotide (AIR) in a radical S-adenosyl-L-methionine (SAM)-dependent reaction. The polypeptide is Phosphomethylpyrimidine synthase (Mesorhizobium japonicum (strain LMG 29417 / CECT 9101 / MAFF 303099) (Mesorhizobium loti (strain MAFF 303099))).